Consider the following 529-residue polypeptide: Arginine--tRNA ligase (529 aa).

Residues Ala113–His123 carry the 'HIGH' region motif.

It belongs to the class-I aminoacyl-tRNA synthetase family. In terms of assembly, monomer.

It is found in the cytoplasm. The enzyme catalyses tRNA(Arg) + L-arginine + ATP = L-arginyl-tRNA(Arg) + AMP + diphosphate. This Aliarcobacter butzleri (strain RM4018) (Arcobacter butzleri) protein is Arginine--tRNA ligase.